Reading from the N-terminus, the 860-residue chain is Leucine--tRNA ligase (860 aa).

The short motif at 42–52 is the 'HIGH' region element; the sequence is PYPSGRLHMGH. The 'KMSKS' region signature appears at 619 to 623; it reads KMSKS. Lysine 622 serves as a coordination point for ATP.

The protein belongs to the class-I aminoacyl-tRNA synthetase family.

It localises to the cytoplasm. The catalysed reaction is tRNA(Leu) + L-leucine + ATP = L-leucyl-tRNA(Leu) + AMP + diphosphate. This Yersinia enterocolitica serotype O:8 / biotype 1B (strain NCTC 13174 / 8081) protein is Leucine--tRNA ligase.